We begin with the raw amino-acid sequence, 306 residues long: Acetaldehyde dehydrogenase 2/3 (306 aa).

The active-site Acyl-thioester intermediate is cysteine 130. NAD(+) is bound by residues 161-169 (SAGPGTRKN) and asparagine 272.

The protein belongs to the acetaldehyde dehydrogenase family.

It carries out the reaction acetaldehyde + NAD(+) + CoA = acetyl-CoA + NADH + H(+). This chain is Acetaldehyde dehydrogenase 2/3 (mhpF), found in Azoarcus sp. (strain BH72).